The primary structure comprises 188 residues: Elongation factor P (188 aa).

Belongs to the elongation factor P family.

Its subcellular location is the cytoplasm. It functions in the pathway protein biosynthesis; polypeptide chain elongation. Its function is as follows. Involved in peptide bond synthesis. Stimulates efficient translation and peptide-bond synthesis on native or reconstituted 70S ribosomes in vitro. Probably functions indirectly by altering the affinity of the ribosome for aminoacyl-tRNA, thus increasing their reactivity as acceptors for peptidyl transferase. This Phytoplasma mali (strain AT) protein is Elongation factor P.